We begin with the raw amino-acid sequence, 150 residues long: Large ribosomal subunit protein bL9 (150 aa).

Belongs to the bacterial ribosomal protein bL9 family.

Functionally, binds to the 23S rRNA. The sequence is that of Large ribosomal subunit protein bL9 from Shewanella loihica (strain ATCC BAA-1088 / PV-4).